The following is a 498-amino-acid chain: Lysine--tRNA ligase (498 aa).

2 residues coordinate Mg(2+): glutamate 408 and glutamate 415.

This sequence belongs to the class-II aminoacyl-tRNA synthetase family. In terms of assembly, homodimer. It depends on Mg(2+) as a cofactor.

The protein resides in the cytoplasm. It catalyses the reaction tRNA(Lys) + L-lysine + ATP = L-lysyl-tRNA(Lys) + AMP + diphosphate. The polypeptide is Lysine--tRNA ligase (Listeria welshimeri serovar 6b (strain ATCC 35897 / DSM 20650 / CCUG 15529 / CIP 8149 / NCTC 11857 / SLCC 5334 / V8)).